The sequence spans 434 residues: Angio-associated migratory cell protein (434 aa).

Positions 1–63 (MESESESGAA…EEEEEEGNEE (63 aa)) are disordered. Residue serine 20 is modified to Phosphoserine. Residues 39–62 (DPDDLAQEMEDVDFEEEEEEEGNE) show a composition bias toward acidic residues. WD repeat units follow at residues 89–129 (LHSA…LLFE), 132–171 (GHKD…EVWS), 173–212 (EAGD…KTFQ), 214–254 (PNCP…HVLK), 258–299 (GHQG…GVFR), 315–354 (SESN…LRHQ), 356–395 (QHQS…LLTD), and 398–433 (GHTA…QRPD).

It is found in the cell membrane. The protein localises to the cytoplasm. In terms of biological role, plays a role in angiogenesis and cell migration. In smooth muscle cell migration, may act through the RhoA pathway. The polypeptide is Angio-associated migratory cell protein (AAMP) (Pongo abelii (Sumatran orangutan)).